A 334-amino-acid polypeptide reads, in one-letter code: Aspartate carbamoyltransferase catalytic subunit (334 aa).

Residues arginine 71 and threonine 72 each coordinate carbamoyl phosphate. Lysine 99 contributes to the L-aspartate binding site. 3 residues coordinate carbamoyl phosphate: arginine 121, histidine 151, and glutamine 154. Positions 184 and 239 each coordinate L-aspartate. Residues glycine 280 and proline 281 each contribute to the carbamoyl phosphate site.

Belongs to the aspartate/ornithine carbamoyltransferase superfamily. ATCase family. Heterododecamer (2C3:3R2) of six catalytic PyrB chains organized as two trimers (C3), and six regulatory PyrI chains organized as three dimers (R2).

The catalysed reaction is carbamoyl phosphate + L-aspartate = N-carbamoyl-L-aspartate + phosphate + H(+). It functions in the pathway pyrimidine metabolism; UMP biosynthesis via de novo pathway; (S)-dihydroorotate from bicarbonate: step 2/3. Its function is as follows. Catalyzes the condensation of carbamoyl phosphate and aspartate to form carbamoyl aspartate and inorganic phosphate, the committed step in the de novo pyrimidine nucleotide biosynthesis pathway. The sequence is that of Aspartate carbamoyltransferase catalytic subunit from Pseudomonas fluorescens biotype A.